Consider the following 946-residue polypeptide: Villin-4 (946 aa).

Gelsolin-like repeat units follow at residues 28-109, 152-219, 274-339, and 641-715; these read NFKP…ETEK, VHVK…EDGK, LEHE…TIMF, and EIHH…PQFF. Disordered stretches follow at residues 744–789, 801–832, and 844–902; these read ATPS…GRSP, PSTR…SSKQ, and GPTK…PAPD. Residues 765 to 777 are compositionally biased toward polar residues; that stretch reads QDKSQQRTRSMSH. A compositionally biased stretch (acidic residues) spans 874–883; the sequence is SENEPEDDEN. One can recognise an HP domain in the interval 881–946; the sequence is DENSTIYPYE…NRLKSDLQLF (66 aa).

It belongs to the villin/gelsolin family.

Its subcellular location is the cytoplasm. The protein resides in the cytoskeleton. Ca(2+)-regulated actin-binding protein. Binds actin microfilaments (MFs). Involved in actin filament bundling, severing and capping. Caps the barbed end of actin filaments and is able to sever them in a calcium-dependent manner. In Oryza sativa subsp. japonica (Rice), this protein is Villin-4.